The chain runs to 476 residues: tRNA(Ile)-lysidine synthase (476 aa).

Position 30–35 (30–35) interacts with ATP; sequence SGGPDS.

This sequence belongs to the tRNA(Ile)-lysidine synthase family.

The protein localises to the cytoplasm. It catalyses the reaction cytidine(34) in tRNA(Ile2) + L-lysine + ATP = lysidine(34) in tRNA(Ile2) + AMP + diphosphate + H(+). Ligates lysine onto the cytidine present at position 34 of the AUA codon-specific tRNA(Ile) that contains the anticodon CAU, in an ATP-dependent manner. Cytidine is converted to lysidine, thus changing the amino acid specificity of the tRNA from methionine to isoleucine. The sequence is that of tRNA(Ile)-lysidine synthase from Bacillus cereus (strain ZK / E33L).